The primary structure comprises 429 residues: Enolase (429 aa).

Q163 is a binding site for (2R)-2-phosphoglycerate. The Proton donor role is filled by E205. 3 residues coordinate Mg(2+): D242, E285, and D312. K337, R366, S367, and K388 together coordinate (2R)-2-phosphoglycerate. Residue K337 is the Proton acceptor of the active site.

It belongs to the enolase family. Mg(2+) serves as cofactor.

It is found in the cytoplasm. It localises to the secreted. The protein resides in the cell surface. It catalyses the reaction (2R)-2-phosphoglycerate = phosphoenolpyruvate + H2O. It participates in carbohydrate degradation; glycolysis; pyruvate from D-glyceraldehyde 3-phosphate: step 4/5. Catalyzes the reversible conversion of 2-phosphoglycerate (2-PG) into phosphoenolpyruvate (PEP). It is essential for the degradation of carbohydrates via glycolysis. The protein is Enolase of Methylorubrum extorquens (strain CM4 / NCIMB 13688) (Methylobacterium extorquens).